The chain runs to 231 residues: NADH-ubiquinone oxidoreductase chain 4 (231 aa).

6 consecutive transmembrane segments (helical) span residues 1 to 21 (PIAG…YGII), 34 to 54 (MFLP…LTCL), 61 to 80 (SLIA…AIII), 84 to 106 (WGLT…LFCL), 128 to 148 (ILPM…ATPP), and 169 to 189 (TIIL…HMFL).

It belongs to the complex I subunit 4 family.

It localises to the mitochondrion membrane. The enzyme catalyses a ubiquinone + NADH + 5 H(+)(in) = a ubiquinol + NAD(+) + 4 H(+)(out). In terms of biological role, core subunit of the mitochondrial membrane respiratory chain NADH dehydrogenase (Complex I) that is believed to belong to the minimal assembly required for catalysis. Complex I functions in the transfer of electrons from NADH to the respiratory chain. The immediate electron acceptor for the enzyme is believed to be ubiquinone. The protein is NADH-ubiquinone oxidoreductase chain 4 (MT-ND4) of Atropoides picadoi (Picado's pit viper).